Consider the following 257-residue polypeptide: uncharacterized protein (257 aa).

The chain crosses the membrane as a helical span at residues 6-26 (IFWLNLAAIIIISIVVSGGMF).

This sequence belongs to the staphylococcal tandem lipoprotein family.

Its subcellular location is the cell membrane. This is an uncharacterized protein from Staphylococcus aureus (strain N315).